A 183-amino-acid chain; its full sequence is UPF0200 protein MmarC6_1392 (183 aa).

8–15 (GMPGSGKS) is a binding site for ATP.

Belongs to the UPF0200 family.

The chain is UPF0200 protein MmarC6_1392 from Methanococcus maripaludis (strain C6 / ATCC BAA-1332).